Reading from the N-terminus, the 434-residue chain is Transcriptional enhancer factor TEF-3 (434 aa).

A compositionally biased stretch (polar residues) spans 1-28 (MEGTAGTITSNEWSSPTSPEGSTASGGS). 2 disordered regions span residues 1-42 (MEGT…AEGV) and 188-215 (QPPL…PPWQ). A DNA-binding region (TEA) is located at residues 36–112 (DNDAEGVWSP…QVLARRKARE (77 aa)). A compositionally biased stretch (pro residues) spans 201–213 (GPAPSPSAPPAPP).

In terms of assembly, interacts with YAP1 and WWTR1/TAZ. As to expression, preferentially expressed in skeletal muscle. Lower levels in pancreas, placenta, and heart.

It localises to the nucleus. Transcription factor which plays a key role in the Hippo signaling pathway, a pathway involved in organ size control and tumor suppression by restricting proliferation and promoting apoptosis. The core of this pathway is composed of a kinase cascade wherein MST1/MST2, in complex with its regulatory protein SAV1, phosphorylates and activates LATS1/2 in complex with its regulatory protein MOB1, which in turn phosphorylates and inactivates YAP1 oncoprotein and WWTR1/TAZ. Acts by mediating gene expression of YAP1 and WWTR1/TAZ, thereby regulating cell proliferation, migration and epithelial mesenchymal transition (EMT) induction. Binds specifically and non-cooperatively to the Sph and GT-IIC 'enhansons' (5'-GTGGAATGT-3') and activates transcription. Binds to the M-CAT motif. The chain is Transcriptional enhancer factor TEF-3 (TEAD4) from Homo sapiens (Human).